An 84-amino-acid chain; its full sequence is Elongation factor 1-beta (84 aa).

It belongs to the EF-1-beta/EF-1-delta family.

Functionally, promotes the exchange of GDP for GTP in EF-1-alpha/GDP, thus allowing the regeneration of EF-1-alpha/GTP that could then be used to form the ternary complex EF-1-alpha/GTP/AAtRNA. This Methanoculleus marisnigri (strain ATCC 35101 / DSM 1498 / JR1) protein is Elongation factor 1-beta.